We begin with the raw amino-acid sequence, 270 residues long: Pyrroline-5-carboxylate reductase (270 aa).

Belongs to the pyrroline-5-carboxylate reductase family.

It is found in the cytoplasm. It carries out the reaction L-proline + NADP(+) = (S)-1-pyrroline-5-carboxylate + NADPH + 2 H(+). It catalyses the reaction L-proline + NAD(+) = (S)-1-pyrroline-5-carboxylate + NADH + 2 H(+). The protein operates within amino-acid biosynthesis; L-proline biosynthesis; L-proline from L-glutamate 5-semialdehyde: step 1/1. Functionally, catalyzes the reduction of 1-pyrroline-5-carboxylate (PCA) to L-proline. The chain is Pyrroline-5-carboxylate reductase from Methanosarcina acetivorans (strain ATCC 35395 / DSM 2834 / JCM 12185 / C2A).